Reading from the N-terminus, the 129-residue chain is Small ribosomal subunit protein uS11 (129 aa).

This sequence belongs to the universal ribosomal protein uS11 family. Part of the 30S ribosomal subunit. Interacts with proteins S7 and S18. Binds to IF-3.

Functionally, located on the platform of the 30S subunit, it bridges several disparate RNA helices of the 16S rRNA. Forms part of the Shine-Dalgarno cleft in the 70S ribosome. The polypeptide is Small ribosomal subunit protein uS11 (Beijerinckia indica subsp. indica (strain ATCC 9039 / DSM 1715 / NCIMB 8712)).